A 619-amino-acid polypeptide reads, in one-letter code: MWNDEDNNPYGSFERRDSFASSTNPASPTARDYSIDARFPTPQDVRYDAPLTPSDAGDDEVPGPTYPREASDAATDDETDDQAHGELVPRRKPGGYDSRIEQMLYENPELPILITEAGKSQESGGRFIVYTIKTGDLTVRRRYSEFASLRDALTRLHPTLVIPPIPEKHTMADYAANPTNAKQDQQIIDLRKRMLAVFLNRCRRMEQVRTDGVWWRFLDPNSSWTEVLHSHPVSSIPKQIMKAPPLDPANPTAGHSFLPVPSSSAKLKTLPTQALDSAAAASLARFPPDANSLSEQDLDAYFIAFETSIKDLESLLTGPMEKVNRRTLNHLSSLASDLSELGARYNAFALSETAPTVSAAIERVGQAADSSYIATEELSTSLSASFAEPMRESAQFAGVVRNVLRYRILKRVQQEMTTDELNKKKALLESLERSEAEARRIDQYLSSSQQIQPPRREPPAQHRRDGSGEDTASIDSDFPPTHSDFSQAPSAKIGAPERTGGSPSHKKAASTSITNKIFGPIRHAVQGVVDVDPERTRRDTIGKTRESIVQLEQAQIASAKDVKDASASVLKDLKRFQREKEDDLKRYMLAYAKSQIEWAKKNQETWEEAKAEVNKINES.

The interval 1–95 (MWNDEDNNPY…ELVPRRKPGG (95 aa)) is disordered. The region spanning 108–224 (PELPILITEA…WRFLDPNSSW (117 aa)) is the PX domain. The a 1,2-diacyl-sn-glycero-3-phospho-(1D-myo-inositol-3-phosphate) site is built by arginine 142, serine 144, lysine 168, and arginine 191. Residues 444–510 (YLSSSQQIQP…GSPSHKKAAS (67 aa)) form a disordered region. Positions 454–467 (PRREPPAQHRRDGS) are enriched in basic and acidic residues.

Belongs to the sorting nexin family.

It localises to the endosome membrane. It is found in the endomembrane system. May be required for cytoplasm to vacuole transport (Cvt) and pexophagy. The chain is Sorting nexin-41 (vsp-6) from Neurospora crassa (strain ATCC 24698 / 74-OR23-1A / CBS 708.71 / DSM 1257 / FGSC 987).